Reading from the N-terminus, the 429-residue chain is MFVDHVKIYVKGGDGGDGMVAFRREKYVPNGGPAGGDGGHGGNVVFEVEEGLRTLMDFRYKRHFKAPRGEHGMSKGMHGKNAEDLIVKVPPGTVVMNEETNAVIADLVEHGQRAVIAKAGRGGRGNSRFATPANPAPELSEKGEPGQELNVILELKVLADVGLVGFPSVGKSTLLSVVSAAKPKIGAYHFTTIVPNLGMIETDDHRSFAMADLPGLIEGAHEGVGLGHQFLRHIERTRVIVHVIDMSGMEGRDPYEDYLTINEELKQYNLRLTERPQIIVANKMDMPDAEENLTAFRQKVGEDVQIFPISAVSRQGLKELLFAIADLLEVTPEFPLYDEVEEQSDATVMYKHEAKGEDFEITRDDDGTFIISGYAIERLFKMTDFSREDGIRRFARQLRAMGVDEALRERGAQDGDTVRLQEFEFEFVD.

In terms of domain architecture, Obg spans M1 to L158. Positions A119–G143 are disordered. The region spanning A159–E329 is the OBG-type G domain. GTP is bound by residues G165–S172, F190–V194, D212–G215, N282–D285, and S310–V312. Residues S172 and T192 each contribute to the Mg(2+) site. The 79-residue stretch at K351–D429 folds into the OCT domain.

Belongs to the TRAFAC class OBG-HflX-like GTPase superfamily. OBG GTPase family. In terms of assembly, monomer. The cofactor is Mg(2+).

The protein localises to the cytoplasm. Functionally, an essential GTPase which binds GTP, GDP and possibly (p)ppGpp with moderate affinity, with high nucleotide exchange rates and a fairly low GTP hydrolysis rate. Plays a role in control of the cell cycle, stress response, ribosome biogenesis and in those bacteria that undergo differentiation, in morphogenesis control. This Lysinibacillus sphaericus (strain C3-41) protein is GTPase Obg.